We begin with the raw amino-acid sequence, 266 residues long: Glutamate racemase (266 aa).

Substrate contacts are provided by residues 7–8 and 39–40; these read DS and YG. C70 acts as the Proton donor/acceptor in catalysis. 71-72 serves as a coordination point for substrate; it reads NT. C186 functions as the Proton donor/acceptor in the catalytic mechanism. 187-188 lines the substrate pocket; that stretch reads TH.

The protein belongs to the aspartate/glutamate racemases family.

The catalysed reaction is L-glutamate = D-glutamate. It functions in the pathway cell wall biogenesis; peptidoglycan biosynthesis. Its function is as follows. Provides the (R)-glutamate required for cell wall biosynthesis. This is Glutamate racemase from Campylobacter curvus (strain 525.92).